The chain runs to 244 residues: MSQARGFDRTITVFSPEGRLYQVEYAFKAFNNAGITSVGVTGKNCACVISQKKVPDKLIDASTVKHVFPITKGIGCVMTGSIADARAQVSRARSEAAEFEYKNGYPMPCDVLAKRMANIAQVSTQRAAMRPLGVAMTLVAVDDEIGPSLFKLDPAGFYIGYKATSAGPKQTETINWLEKRFKKDGIPSNLTDTVETGIQALMSSLSTDFKSTELQIGVVEDDKPFRVLSVEEIEAHLQSIAEKD.

This sequence belongs to the peptidase T1A family. As to quaternary structure, the 26S proteasome consists of a 20S proteasome core and two 19S regulatory subunits. The 20S proteasome core is composed of 28 subunits that are arranged in four stacked rings, resulting in a barrel-shaped structure. The two end rings are each formed by seven alpha subunits, and the two central rings are each formed by seven beta subunits. The catalytic chamber with the active sites is on the inside of the barrel.

Its subcellular location is the cytoplasm. It is found in the nucleus. Its function is as follows. The proteasome is a multicatalytic proteinase complex which is characterized by its ability to cleave peptides with Arg, Phe, Tyr, Leu, and Glu adjacent to the leaving group at neutral or slightly basic pH. The proteasome has an ATP-dependent proteolytic activity. The polypeptide is Probable proteasome subunit alpha type-1 (Schizosaccharomyces pombe (strain 972 / ATCC 24843) (Fission yeast)).